We begin with the raw amino-acid sequence, 497 residues long: Probable malate:quinone oxidoreductase (497 aa).

Belongs to the MQO family. FAD serves as cofactor.

It catalyses the reaction (S)-malate + a quinone = a quinol + oxaloacetate. Its pathway is carbohydrate metabolism; tricarboxylic acid cycle; oxaloacetate from (S)-malate (quinone route): step 1/1. The protein is Probable malate:quinone oxidoreductase of Wolinella succinogenes (strain ATCC 29543 / DSM 1740 / CCUG 13145 / JCM 31913 / LMG 7466 / NCTC 11488 / FDC 602W) (Vibrio succinogenes).